A 427-amino-acid chain; its full sequence is Trigger factor (427 aa).

The 81-residue stretch at 160–240 (GDTLIGDVTK…VKEVKRLELP (81 aa)) folds into the PPIase FKBP-type domain.

Belongs to the FKBP-type PPIase family. Tig subfamily.

It localises to the cytoplasm. It carries out the reaction [protein]-peptidylproline (omega=180) = [protein]-peptidylproline (omega=0). Involved in protein export. Acts as a chaperone by maintaining the newly synthesized protein in an open conformation. Functions as a peptidyl-prolyl cis-trans isomerase. This Chlorobaculum parvum (strain DSM 263 / NCIMB 8327) (Chlorobium vibrioforme subsp. thiosulfatophilum) protein is Trigger factor.